A 115-amino-acid polypeptide reads, in one-letter code: Parathyroid hormone (115 aa).

An N-terminal signal peptide occupies residues Met1–Gly25. Positions Lys26–Arg31 are excised as a propeptide. An important for receptor binding region spans residues Arg51–Gly69. Residues Gly77 to Gly99 are disordered. A compositionally biased stretch (basic and acidic residues) spans Lys84–Gly99.

The protein belongs to the parathyroid hormone family. Interacts with PTH1R (via N-terminal extracellular domain).

It localises to the secreted. In terms of biological role, parathyroid hormone elevates calcium level by dissolving the salts in bone and preventing their renal excretion. Acts by binding to its receptor, PTH1R, activating G protein-coupled receptor signaling. Stimulates [1-14C]-2-deoxy-D-glucose (2DG) transport and glycogen synthesis in osteoblastic cells. This chain is Parathyroid hormone, found in Bos taurus (Bovine).